Here is a 141-residue protein sequence, read N- to C-terminus: Lutropin subunit beta (141 aa).

The N-terminal stretch at 1-20 is a signal peptide; that stretch reads MEMFQGLLLWLLLNTGGAWA. Cystine bridges form between Cys29-Cys77, Cys43-Cys92, Cys46-Cys130, Cys54-Cys108, Cys58-Cys110, and Cys113-Cys120. The N-linked (GlcNAc...) asparagine glycan is linked to Asn33.

It belongs to the glycoprotein hormones subunit beta family. Heterodimer of a common alpha chain and a unique beta chain which confers biological specificity to thyrotropin, lutropin, follitropin and gonadotropin.

It localises to the secreted. In terms of biological role, promotes spermatogenesis and ovulation by stimulating the testes and ovaries to synthesize steroids. The polypeptide is Lutropin subunit beta (LHB) (Ailuropoda melanoleuca (Giant panda)).